A 305-amino-acid polypeptide reads, in one-letter code: Glycine betaine-binding protein YehZ (305 aa).

The first 23 residues, 1–23, serve as a signal peptide directing secretion; it reads MPLLKLWAGSLVMLAAVSLPLQA.

This sequence belongs to the OsmX family. In terms of assembly, the complex is composed of two ATP-binding proteins (YehX), two transmembrane proteins (YehW and YehY) and a solute-binding protein (YehZ).

The protein resides in the periplasm. Its function is as follows. Part of an ABC transporter complex involved in low-affinity glycine betaine uptake. Binds glycine betaine with low affinity. This is Glycine betaine-binding protein YehZ (yehZ) from Escherichia coli (strain K12).